The chain runs to 445 residues: Tubulin beta chain (445 aa).

Residues Gln11, Glu69, Ser138, Gly142, Thr143, Gly144, Asn204, and Asn226 each coordinate GTP. A Mg(2+)-binding site is contributed by Glu69. The disordered stretch occupies residues 426 to 445 (QDATAEEEGEFEEEEGDVEA). A compositionally biased stretch (acidic residues) spans 429–445 (TAEEEGEFEEEEGDVEA).

The protein belongs to the tubulin family. Dimer of alpha and beta chains. A typical microtubule is a hollow water-filled tube with an outer diameter of 25 nm and an inner diameter of 15 nM. Alpha-beta heterodimers associate head-to-tail to form protofilaments running lengthwise along the microtubule wall with the beta-tubulin subunit facing the microtubule plus end conferring a structural polarity. Microtubules usually have 13 protofilaments but different protofilament numbers can be found in some organisms and specialized cells. Interacts with DCX/apicortin; the interaction stabilizes microtubule assembly. Mg(2+) serves as cofactor.

The protein resides in the cytoplasm. It localises to the cytoskeleton. Functionally, tubulin is the major constituent of microtubules, a cylinder consisting of laterally associated linear protofilaments composed of alpha- and beta-tubulin heterodimers. Microtubules grow by the addition of GTP-tubulin dimers to the microtubule end, where a stabilizing cap forms. Below the cap, tubulin dimers are in GDP-bound state, owing to GTPase activity of alpha-tubulin. This is Tubulin beta chain from Plasmodium falciparum (isolate 3D7).